The chain runs to 299 residues: Pantothenate synthetase (299 aa).

41–48 is an ATP binding site; it reads MGALHEGH. The Proton donor role is filled by His-48. Gln-72 contacts (R)-pantoate. Gln-72 contacts beta-alanine. Residue 158-161 coordinates ATP; the sequence is GQKD. Gln-164 is a binding site for (R)-pantoate. ATP is bound by residues Val-187 and 195–198; that span reads MSSR.

Belongs to the pantothenate synthetase family. As to quaternary structure, homodimer.

It is found in the cytoplasm. It carries out the reaction (R)-pantoate + beta-alanine + ATP = (R)-pantothenate + AMP + diphosphate + H(+). The protein operates within cofactor biosynthesis; (R)-pantothenate biosynthesis; (R)-pantothenate from (R)-pantoate and beta-alanine: step 1/1. Catalyzes the condensation of pantoate with beta-alanine in an ATP-dependent reaction via a pantoyl-adenylate intermediate. The protein is Pantothenate synthetase of Acidobacterium capsulatum (strain ATCC 51196 / DSM 11244 / BCRC 80197 / JCM 7670 / NBRC 15755 / NCIMB 13165 / 161).